The primary structure comprises 340 residues: Glycerol-3-phosphate dehydrogenase [NAD(P)+] (340 aa).

3 residues coordinate NADPH: Ser13, Trp14, and Lys108. Residues Lys108, Gly139, and Ser141 each contribute to the sn-glycerol 3-phosphate site. Ala143 lines the NADPH pocket. Sn-glycerol 3-phosphate-binding residues include Lys194, Asp247, Ser257, Arg258, and Asn259. The active-site Proton acceptor is the Lys194. Residue Arg258 coordinates NADPH. NADPH is bound by residues Val282 and Glu284.

Belongs to the NAD-dependent glycerol-3-phosphate dehydrogenase family.

The protein resides in the cytoplasm. The catalysed reaction is sn-glycerol 3-phosphate + NAD(+) = dihydroxyacetone phosphate + NADH + H(+). The enzyme catalyses sn-glycerol 3-phosphate + NADP(+) = dihydroxyacetone phosphate + NADPH + H(+). Its pathway is membrane lipid metabolism; glycerophospholipid metabolism. Its function is as follows. Catalyzes the reduction of the glycolytic intermediate dihydroxyacetone phosphate (DHAP) to sn-glycerol 3-phosphate (G3P), the key precursor for phospholipid synthesis. This chain is Glycerol-3-phosphate dehydrogenase [NAD(P)+], found in Streptococcus thermophilus (strain CNRZ 1066).